Reading from the N-terminus, the 147-residue chain is Large ribosomal subunit protein uL13 (147 aa).

Belongs to the universal ribosomal protein uL13 family. Part of the 50S ribosomal subunit.

Its function is as follows. This protein is one of the early assembly proteins of the 50S ribosomal subunit, although it is not seen to bind rRNA by itself. It is important during the early stages of 50S assembly. This chain is Large ribosomal subunit protein uL13, found in Corynebacterium diphtheriae (strain ATCC 700971 / NCTC 13129 / Biotype gravis).